A 131-amino-acid chain; its full sequence is Glycine cleavage system H protein (131 aa).

In terms of domain architecture, Lipoyl-binding spans Arg24–Glu106. Lys65 is subject to N6-lipoyllysine.

This sequence belongs to the GcvH family. As to quaternary structure, the glycine cleavage system is composed of four proteins: P, T, L and H. It depends on (R)-lipoate as a cofactor.

In terms of biological role, the glycine cleavage system catalyzes the degradation of glycine. The H protein shuttles the methylamine group of glycine from the P protein to the T protein. The sequence is that of Glycine cleavage system H protein from Xylella fastidiosa (strain M12).